Here is a 243-residue protein sequence, read N- to C-terminus: MVLNFKFFTCENSLEDNSTTMLKNSIESSFINKTLTNSIILTTFNDFSNWARLSSLWPLLYGTSCCFIEFASLIGSRFDFDRYGLVPRSSPRQADLIITAGTVTMKMAPSLVRLYEQMPEPKYVIAMGACTITGGMFSTDSYTTVRGVDKLIPVDIYLPGCPPKPEAIIDAIIKLRKKIAQEIYEEKKILKKGTRFFTLNHQFNFFSNLDNPKLTSSNQFFQSKKTSKVLLETSLTFKEKENL.

Residues Cys65, Cys66, Cys130, and Cys161 each coordinate [4Fe-4S] cluster.

The protein belongs to the complex I 20 kDa subunit family. NDH is composed of at least 16 different subunits, 5 of which are encoded in the nucleus. Requires [4Fe-4S] cluster as cofactor.

The protein resides in the plastid. It is found in the chloroplast thylakoid membrane. It catalyses the reaction a plastoquinone + NADH + (n+1) H(+)(in) = a plastoquinol + NAD(+) + n H(+)(out). It carries out the reaction a plastoquinone + NADPH + (n+1) H(+)(in) = a plastoquinol + NADP(+) + n H(+)(out). In terms of biological role, NDH shuttles electrons from NAD(P)H:plastoquinone, via FMN and iron-sulfur (Fe-S) centers, to quinones in the photosynthetic chain and possibly in a chloroplast respiratory chain. The immediate electron acceptor for the enzyme in this species is believed to be plastoquinone. Couples the redox reaction to proton translocation, and thus conserves the redox energy in a proton gradient. The chain is NAD(P)H-quinone oxidoreductase subunit K, chloroplastic from Marchantia polymorpha (Common liverwort).